The primary structure comprises 202 residues: MKVVAFERQEQGTGASRRLRNAGKTTGIVYGGEAAPQKIELDHNALWHALKKEAFHSSILDLEVAGQSQQVLLRDVQYHPFKQLVLHVDFQRVDAKKKLHTKVPLHFLNAEVSPAVKLSSAVVSHVATEIEIECLPSALPEFLEVDLSKIEAGQSLHAKDIALPKGVALVAHIDAENPVVASATIPAGAVSDAAGEGETPAA.

This sequence belongs to the bacterial ribosomal protein bL25 family. CTC subfamily. In terms of assembly, part of the 50S ribosomal subunit; part of the 5S rRNA/L5/L18/L25 subcomplex. Contacts the 5S rRNA. Binds to the 5S rRNA independently of L5 and L18.

Functionally, this is one of the proteins that binds to the 5S RNA in the ribosome where it forms part of the central protuberance. The polypeptide is Large ribosomal subunit protein bL25 (Burkholderia ambifaria (strain MC40-6)).